Consider the following 812-residue polypeptide: DNA gyrase subunit A (812 aa).

Residues 31 to 496 (IPDVRDGLKP…GNTDFNVEDV (466 aa)) form the Topo IIA-type catalytic domain. The active-site O-(5'-phospho-DNA)-tyrosine intermediate is Tyr-119. The GyrA-box signature appears at 523 to 529 (QGRGGKG).

The protein belongs to the type II topoisomerase GyrA/ParC subunit family. As to quaternary structure, heterotetramer, composed of two GyrA and two GyrB chains. In the heterotetramer, GyrA contains the active site tyrosine that forms a transient covalent intermediate with DNA, while GyrB binds cofactors and catalyzes ATP hydrolysis.

The protein localises to the cytoplasm. The enzyme catalyses ATP-dependent breakage, passage and rejoining of double-stranded DNA.. Functionally, a type II topoisomerase that negatively supercoils closed circular double-stranded (ds) DNA in an ATP-dependent manner to modulate DNA topology and maintain chromosomes in an underwound state. Negative supercoiling favors strand separation, and DNA replication, transcription, recombination and repair, all of which involve strand separation. Also able to catalyze the interconversion of other topological isomers of dsDNA rings, including catenanes and knotted rings. Type II topoisomerases break and join 2 DNA strands simultaneously in an ATP-dependent manner. This Kosmotoga olearia (strain ATCC BAA-1733 / DSM 21960 / TBF 19.5.1) protein is DNA gyrase subunit A.